The chain runs to 562 residues: Dihydroxy-acid dehydratase (562 aa).

D80 is a Mg(2+) binding site. C121 is a binding site for [2Fe-2S] cluster. 2 residues coordinate Mg(2+): D122 and K123. K123 bears the N6-carboxylysine mark. C194 contacts [2Fe-2S] cluster. Residue E446 participates in Mg(2+) binding. Catalysis depends on S472, which acts as the Proton acceptor.

This sequence belongs to the IlvD/Edd family. As to quaternary structure, homodimer. [2Fe-2S] cluster is required as a cofactor. Mg(2+) serves as cofactor.

The enzyme catalyses (2R)-2,3-dihydroxy-3-methylbutanoate = 3-methyl-2-oxobutanoate + H2O. The catalysed reaction is (2R,3R)-2,3-dihydroxy-3-methylpentanoate = (S)-3-methyl-2-oxopentanoate + H2O. It functions in the pathway amino-acid biosynthesis; L-isoleucine biosynthesis; L-isoleucine from 2-oxobutanoate: step 3/4. Its pathway is amino-acid biosynthesis; L-valine biosynthesis; L-valine from pyruvate: step 3/4. Functions in the biosynthesis of branched-chain amino acids. Catalyzes the dehydration of (2R,3R)-2,3-dihydroxy-3-methylpentanoate (2,3-dihydroxy-3-methylvalerate) into 2-oxo-3-methylpentanoate (2-oxo-3-methylvalerate) and of (2R)-2,3-dihydroxy-3-methylbutanoate (2,3-dihydroxyisovalerate) into 2-oxo-3-methylbutanoate (2-oxoisovalerate), the penultimate precursor to L-isoleucine and L-valine, respectively. In Staphylococcus epidermidis (strain ATCC 35984 / DSM 28319 / BCRC 17069 / CCUG 31568 / BM 3577 / RP62A), this protein is Dihydroxy-acid dehydratase.